We begin with the raw amino-acid sequence, 158 residues long: Phosphopantetheine adenylyltransferase (158 aa).

Threonine 10 provides a ligand contact to substrate. ATP-binding positions include 10–11 (TF) and histidine 18. Substrate-binding residues include lysine 42, leucine 74, and arginine 88. ATP is bound by residues 89-91 (GLR), glutamate 99, and 124-130 (NSFISST).

It belongs to the bacterial CoaD family. As to quaternary structure, homohexamer. The cofactor is Mg(2+).

It is found in the cytoplasm. The catalysed reaction is (R)-4'-phosphopantetheine + ATP + H(+) = 3'-dephospho-CoA + diphosphate. It participates in cofactor biosynthesis; coenzyme A biosynthesis; CoA from (R)-pantothenate: step 4/5. Its function is as follows. Reversibly transfers an adenylyl group from ATP to 4'-phosphopantetheine, yielding dephospho-CoA (dPCoA) and pyrophosphate. The chain is Phosphopantetheine adenylyltransferase from Shewanella woodyi (strain ATCC 51908 / MS32).